We begin with the raw amino-acid sequence, 134 residues long: Lymphocyte antigen 6F (134 aa).

Positions 1–26 are cleaved as a signal peptide; sequence MDSCHTTKSCVLILLVVLLCAERAQG. Positions 27-119 constitute a UPAR/Ly6 domain; sequence LECYNCLGVS…TGGSTWTMTR (93 aa). 5 disulfide bridges follow: Cys29–Cys53, Cys32–Cys41, Cys46–Cys74, Cys78–Cys98, and Cys99–Cys104. Gly112 is lipidated: GPI-anchor amidated glycine. The propeptide at 113-134 is removed in mature form; it reads STWTMTRVLLLNLGSVFLQTLL.

It is found in the cell membrane. The protein is Lymphocyte antigen 6F (Ly6f) of Mus musculus (Mouse).